The chain runs to 194 residues: Xanthine phosphoribosyltransferase (194 aa).

Xanthine is bound by residues Leu20 and Asn27. Ala128–Ala132 is a 5-phospho-alpha-D-ribose 1-diphosphate binding site. Lys156 contacts xanthine.

Belongs to the purine/pyrimidine phosphoribosyltransferase family. Xpt subfamily. Homodimer.

Its subcellular location is the cytoplasm. It carries out the reaction XMP + diphosphate = xanthine + 5-phospho-alpha-D-ribose 1-diphosphate. Its pathway is purine metabolism; XMP biosynthesis via salvage pathway; XMP from xanthine: step 1/1. Its function is as follows. Converts the preformed base xanthine, a product of nucleic acid breakdown, to xanthosine 5'-monophosphate (XMP), so it can be reused for RNA or DNA synthesis. The chain is Xanthine phosphoribosyltransferase from Lachnoclostridium phytofermentans (strain ATCC 700394 / DSM 18823 / ISDg) (Clostridium phytofermentans).